Reading from the N-terminus, the 300-residue chain is MCDPTRDDGSSRSRVVSTMQKRAYFQRQWPLVDVVRASVVVIVHFLCLLAPFNFKWEALRFGLVLFALTTLSITFSFHRNLSHRSFKIPKWLEYPWAYSAVFALQGDPMDWVSIHRFHHQFTDSDRDPHSPKEGLLFSHILWIFDTQYIKYKCGGRDNVLDLKKQWFYKFLRRTIAVHILMFWTILYLYGGLPYLTCGGGVGIFIGYHVTWLVNSACHIWGSRSWNTKDTSRNVWWLSLFTMGESWHNNHHAFESSARQGLEWWQIDITWYLIRLFEVLGIATDVKLPSELQKQKMALVR.

2 helical membrane passes run valine 39–leucine 59 and phenylalanine 61–leucine 81. The Histidine box-1 motif lies at histidine 78–histidine 83. Residues histidine 115–histidine 119 carry the Histidine box-2 motif. A run of 2 helical transmembrane segments spans residues isoleucine 175–leucine 195 and glycine 200–tryptophan 220. The short motif at histidine 247–histidine 251 is the Histidine box-3 element.

The protein belongs to the fatty acid desaturase type 1 family. It depends on Fe cation as a cofactor.

It is found in the endoplasmic reticulum membrane. The protein operates within lipid metabolism; polyunsaturated fatty acid biosynthesis. This Arabidopsis thaliana (Mouse-ear cress) protein is Delta-9 desaturase-like 4 protein.